Reading from the N-terminus, the 871-residue chain is Probable receptor-like protein kinase At2g21480 (871 aa).

Positions 1-39 (MEIRKKPNIPMCLVLDSSSRPFMTLLFTILLFLTGLASA) are cleaved as a signal peptide. At 40–439 (VGAVGGSPTA…GQRASMGKQG (400 aa)) the chain is on the extracellular side. N-linked (GlcNAc...) asparagine glycosylation is found at Asn169, Asn182, Asn253, Asn316, and Asn381. A helical membrane pass occupies residues 440-460 (MVATAGFVMMFGAFVGLGAMV). The Cytoplasmic segment spans residues 461–871 (YKWKKRPQDW…FTQFASLNGR (411 aa)). The region spanning 525–797 (FDASEIIGVG…GDVLWNLEYA (273 aa)) is the Protein kinase domain. ATP contacts are provided by residues 531–539 (IGVGGFGNV) and Lys553. Asp649 functions as the Proton acceptor in the catalytic mechanism. The disordered stretch occupies residues 808 to 871 (KAEAEEVETP…FTQFASLNGR (64 aa)). Residues 817–839 (PKPVAVPAAAPTSPAATTAAASE) are compositionally biased toward low complexity. Polar residues predominate over residues 854 to 871 (DQHSGTTMFTQFASLNGR).

This sequence belongs to the protein kinase superfamily. Ser/Thr protein kinase family.

It is found in the membrane. The chain is Probable receptor-like protein kinase At2g21480 from Arabidopsis thaliana (Mouse-ear cress).